Here is a 278-residue protein sequence, read N- to C-terminus: Hydroxyethylthiazole kinase (278 aa).

Substrate is bound at residue methionine 51. The ATP site is built by arginine 127 and serine 173. Substrate is bound at residue glycine 201.

The protein belongs to the Thz kinase family. It depends on Mg(2+) as a cofactor.

The enzyme catalyses 5-(2-hydroxyethyl)-4-methylthiazole + ATP = 4-methyl-5-(2-phosphooxyethyl)-thiazole + ADP + H(+). The protein operates within cofactor biosynthesis; thiamine diphosphate biosynthesis; 4-methyl-5-(2-phosphoethyl)-thiazole from 5-(2-hydroxyethyl)-4-methylthiazole: step 1/1. In terms of biological role, catalyzes the phosphorylation of the hydroxyl group of 4-methyl-5-beta-hydroxyethylthiazole (THZ). The polypeptide is Hydroxyethylthiazole kinase (Leptothrix cholodnii (strain ATCC 51168 / LMG 8142 / SP-6) (Leptothrix discophora (strain SP-6))).